Here is a 404-residue protein sequence, read N- to C-terminus: S-adenosylmethionine synthase (404 aa).

Residues 1–13 are compositionally biased toward polar residues; sequence MSQSRYFFTSESV. Residues 1–21 form a disordered region; that stretch reads MSQSRYFFTSESVSEGHPDKV. Histidine 17 is a binding site for ATP. Aspartate 19 contributes to the Mg(2+) binding site. Glutamate 45 contacts K(+). The L-methionine site is built by glutamate 58 and glutamine 101. The segment at 101–111 is flexible loop; the sequence is QSPDINRGVDR. ATP-binding positions include 172–174, 245–246, aspartate 254, 260–261, alanine 277, and lysine 281; these read DAK, RF, and RK. Residue aspartate 254 participates in L-methionine binding. Lysine 285 contacts L-methionine.

It belongs to the AdoMet synthase family. Homotetramer; dimer of dimers. Requires Mg(2+) as cofactor. K(+) serves as cofactor.

It localises to the cytoplasm. It carries out the reaction L-methionine + ATP + H2O = S-adenosyl-L-methionine + phosphate + diphosphate. Its pathway is amino-acid biosynthesis; S-adenosyl-L-methionine biosynthesis; S-adenosyl-L-methionine from L-methionine: step 1/1. Its function is as follows. Catalyzes the formation of S-adenosylmethionine (AdoMet) from methionine and ATP. The overall synthetic reaction is composed of two sequential steps, AdoMet formation and the subsequent tripolyphosphate hydrolysis which occurs prior to release of AdoMet from the enzyme. The protein is S-adenosylmethionine synthase of Chlorobium phaeobacteroides (strain DSM 266 / SMG 266 / 2430).